A 286-amino-acid chain; its full sequence is Putative ribosome-inactivating protein (286 aa).

Residues 1–21 form the signal peptide; the sequence is MNRFSVLMCLVILSIFHGVPT. N-linked (GlcNAc...) asparagine glycosylation is found at Asn-103 and Asn-110. The active site involves Glu-185. A glycan (N-linked (GlcNAc...) asparagine) is linked at Asn-252.

It belongs to the ribosome-inactivating protein family. Type 1 RIP subfamily.

The enzyme catalyses Endohydrolysis of the N-glycosidic bond at one specific adenosine on the 28S rRNA.. This Cucumis ficifolius (Cucumis figarei) protein is Putative ribosome-inactivating protein.